Here is a 202-residue protein sequence, read N- to C-terminus: Holliday junction branch migration complex subunit RuvA (202 aa).

Residues 1–64 (MIDFLKGRLV…ETALEMFGFS (64 aa)) are domain I. Residues 65–143 (SELDRTAFLL…KQQVAVSAEL (79 aa)) are domain II. The flexible linker stretch occupies residues 144-152 (PASDGVPVL). Residues 152–202 (LAGRAENEALAALISLGYTPREAREALNRLPDRKLDAAGLVHAALRIMGSQ) form a domain III region.

This sequence belongs to the RuvA family. In terms of assembly, homotetramer. Forms an RuvA(8)-RuvB(12)-Holliday junction (HJ) complex. HJ DNA is sandwiched between 2 RuvA tetramers; dsDNA enters through RuvA and exits via RuvB. An RuvB hexamer assembles on each DNA strand where it exits the tetramer. Each RuvB hexamer is contacted by two RuvA subunits (via domain III) on 2 adjacent RuvB subunits; this complex drives branch migration. In the full resolvosome a probable DNA-RuvA(4)-RuvB(12)-RuvC(2) complex forms which resolves the HJ.

It localises to the cytoplasm. In terms of biological role, the RuvA-RuvB-RuvC complex processes Holliday junction (HJ) DNA during genetic recombination and DNA repair, while the RuvA-RuvB complex plays an important role in the rescue of blocked DNA replication forks via replication fork reversal (RFR). RuvA specifically binds to HJ cruciform DNA, conferring on it an open structure. The RuvB hexamer acts as an ATP-dependent pump, pulling dsDNA into and through the RuvAB complex. HJ branch migration allows RuvC to scan DNA until it finds its consensus sequence, where it cleaves and resolves the cruciform DNA. The sequence is that of Holliday junction branch migration complex subunit RuvA from Desulforudis audaxviator (strain MP104C).